The sequence spans 218 residues: Glutathione S-transferase Mu 1 (218 aa).

The region spanning 2–88 (PMILGYWDIR…YIARKHNLCG (87 aa)) is the GST N-terminal domain. Residue 7–8 (YW) participates in glutathione binding. T34 carries the phosphothreonine modification. Glutathione is bound by residues 43–46 (RSQW), K50, 59–60 (NL), and 72–73 (QS). The 119-residue stretch at 90 to 208 (TEEEKIRVDI…KSSRFLPRPV (119 aa)) folds into the GST C-terminal domain. Y116 provides a ligand contact to substrate. S210 is subject to Phosphoserine.

The protein belongs to the GST superfamily. Mu family. Homodimer. Liver (at protein level).

The protein localises to the cytoplasm. The catalysed reaction is RX + glutathione = an S-substituted glutathione + a halide anion + H(+). It catalyses the reaction prostaglandin A2 + glutathione = prostaglandin A2-S-(R)-glutathione. It carries out the reaction prostaglandin J2 + glutathione = prostaglandin J2-S-(R)-glutathione. The enzyme catalyses prostaglandin J2 + glutathione = prostaglandin J2-S-(S)-glutathione. The catalysed reaction is prostaglandin A2 + glutathione = prostaglandin A2-S-(S)-glutathione. It catalyses the reaction 11(S)-hydroxy-14(S),15(S)-epoxy-(5Z,8Z,12E)-eicosatrienoate + glutathione = (11S,15S)-dihydroxy-14(R)-S-glutathionyl-(5Z,8Z,12E)-eicosatrienoate. Functionally, conjugation of reduced glutathione to a wide number of exogenous and endogenous hydrophobic electrophiles. Involved in the formation of glutathione conjugates of both prostaglandin A2 (PGA2) and prostaglandin J2 (PGJ2). Participates in the formation of novel hepoxilin regioisomers. This Homo sapiens (Human) protein is Glutathione S-transferase Mu 1.